Here is a 182-residue protein sequence, read N- to C-terminus: UPF0397 protein BCA_2731 (182 aa).

A run of 5 helical transmembrane segments spans residues 9 to 29 (VVAIGIGAALYGILGLWGFSI), 40 to 60 (AILTVFGALFGPVAGLLIGLI), 71 to 91 (WGIWWGWVISSGIIGFAMGLI), 114 to 134 (ITGLIGIVIAIIFAGAFDIIV), and 142 to 162 (IVIQVLGATIADVIVFLVLGL).

This sequence belongs to the UPF0397 family.

The protein resides in the cell membrane. The polypeptide is UPF0397 protein BCA_2731 (Bacillus cereus (strain 03BB102)).